A 1050-amino-acid chain; its full sequence is Mitotic checkpoint serine/threonine-protein kinase BUB1 beta (1050 aa).

Positions 62–226 (FEYEIRFYTG…FESSVPQRST (165 aa)) constitute a BUB1 N-terminal domain. Residues 111-118 (GEKRYYSD) carry the Nuclear localization signal motif. The segment at 152–185 (AQFYISWAEEYEARENFRKADAIFQEGIQQKAEP) is necessary for interaction with KNL1. Residues 224–232 (RSTLAELKS) carry the D-box motif. An N6-acetyllysine; by PCAF modification is found at Lys-250. Ser-367 is modified (phosphoserine). Residues 368–393 (TRKPGKEEGDPLQRVQSHQQASEEKK) are disordered. Ser-435 carries the post-translational modification Phosphoserine. The disordered stretch occupies residues 456 to 480 (IQTTQQERTGDQQEETMPTKETTKL). Ser-543, Ser-665, and Ser-670 each carry phosphoserine. Ser-676 carries the phosphoserine; by PLK1 modification. Ser-697 carries the phosphoserine modification. The region spanning 766–1050 (YCIKREYLIC…LTSPGALLFQ (285 aa)) is the Protein kinase domain. 772–780 (YLICEDYKL) serves as a coordination point for ATP. Thr-792 carries the phosphothreonine; by PLK1 modification. Lys-795 serves as a coordination point for ATP. Asp-882 (proton acceptor) is an active-site residue. Residue Thr-1008 is modified to Phosphothreonine; by PLK1. Residue Thr-1042 is modified to Phosphothreonine. At Ser-1043 the chain carries Phosphoserine.

The protein belongs to the protein kinase superfamily. Ser/Thr protein kinase family. BUB1 subfamily. In terms of assembly, interacts with CENPE. Interacts with PLK1. Part of a complex containing BUB3, CDC20 and BUB1B. Interacts with anaphase-promoting complex/cyclosome (APC/C). Interacts with KNL1. Interacts with KAT2B. Interacts with RIPK3. Interacts with the closed conformation form of MAD2L1. In terms of processing, proteolytically cleaved by caspase-3 in a cell cycle specific manner. The cleavage might be involved in the durability of the cell cycle delay. Caspase-3 cleavage is associated with abrogation of the mitotic checkpoint. The major site of cleavage is at Asp-610. Post-translationally, acetylation at Lys-250 regulates its degradation and timing in anaphase entry. Ubiquitinated. Degraded by the proteasome. Ubiquitinated by UBR5, promoting disassembly of the mitotic checkpoint complex from the APC/C complex. In terms of processing, sumoylated with SUMO2 and SUMO3. The sumoylation mediates the association with CENPE at the kinetochore. Post-translationally, autophosphorylated in vitro. Intramolecular autophosphorylation is stimulated by CENPE. Phosphorylated during mitosis and hyperphosphorylated in mitotically arrested cells. Phosphorylation at Ser-670 and Ser-1043 occurs at kinetochores upon mitotic entry with dephosphorylation at the onset of anaphase. In terms of tissue distribution, highly expressed in thymus followed by spleen. Preferentially expressed in tissues with a high mitotic index.

It localises to the cytoplasm. Its subcellular location is the nucleus. The protein localises to the chromosome. It is found in the centromere. The protein resides in the kinetochore. It localises to the cytoskeleton. Its subcellular location is the microtubule organizing center. The protein localises to the centrosome. It catalyses the reaction L-seryl-[protein] + ATP = O-phospho-L-seryl-[protein] + ADP + H(+). The enzyme catalyses L-threonyl-[protein] + ATP = O-phospho-L-threonyl-[protein] + ADP + H(+). With respect to regulation, kinase activity stimulated by CENPE. Functionally, essential component of the mitotic checkpoint. Required for normal mitosis progression. The mitotic checkpoint delays anaphase until all chromosomes are properly attached to the mitotic spindle. One of its checkpoint functions is to inhibit the activity of the anaphase-promoting complex/cyclosome (APC/C) by blocking the binding of CDC20 to APC/C, independently of its kinase activity. The other is to monitor kinetochore activities that depend on the kinetochore motor CENPE. Required for kinetochore localization of CENPE. Negatively regulates PLK1 activity in interphase cells and suppresses centrosome amplification. Also implicated in triggering apoptosis in polyploid cells that exit aberrantly from mitotic arrest. May play a role for tumor suppression. In Homo sapiens (Human), this protein is Mitotic checkpoint serine/threonine-protein kinase BUB1 beta (BUB1B).